We begin with the raw amino-acid sequence, 214 residues long: ER lumen protein-retaining receptor 3 (214 aa).

At methionine 1–phenylalanine 4 the chain is on the lumenal side. Residues arginine 5–tryptophan 24 form a helical membrane-spanning segment. The Cytoplasmic segment spans residues arginine 25–isoleucine 32. A helical transmembrane segment spans residues serine 33–phenylalanine 52. Residues arginine 47–tyrosine 48 form an interaction with the K-D-E-L motif on target proteins region. Residues serine 53–isoleucine 58 lie on the Lumenal side of the membrane. A helical transmembrane segment spans residues tyrosine 59–tyrosine 79. Topologically, residues tryptophan 80–threonine 92 are cytoplasmic. The helical transmembrane segment at phenylalanine 93 to asparagine 110 threads the bilayer. At tyrosine 111–methionine 116 the chain is on the lumenal side. Residues glutamate 117–leucine 135 traverse the membrane as a helical segment. Residues phenylalanine 136–threonine 149 are Cytoplasmic-facing. Residues histidine 150–arginine 168 form a helical membrane-spanning segment. The interval arginine 159–arginine 169 is interaction with the K-D-E-L motif on target proteins. Residues arginine 169–glutamine 178 are Lumenal-facing. Residues isoleucine 179–valine 199 traverse the membrane as a helical segment. The Cytoplasmic segment spans residues threonine 200–valine 214. An important for recycling of cargo proteins with the sequence motif K-D-E-L from the Golgi to the endoplasmic reticulum region spans residues lysine 204–lysine 207.

It belongs to the ERD2 family.

It localises to the endoplasmic reticulum membrane. Its subcellular location is the golgi apparatus membrane. It is found in the cytoplasmic vesicle. The protein localises to the COPI-coated vesicle membrane. Functionally, receptor for the C-terminal sequence motif K-D-E-L that is present on endoplasmic reticulum resident proteins and that mediates their recycling from the Golgi back to the endoplasmic reticulum. The sequence is that of ER lumen protein-retaining receptor 3 (Kdelr3) from Mus musculus (Mouse).